The chain runs to 222 residues: Type II restriction enzyme AbrI (222 aa).

Disordered regions lie at residues 21 to 45 and 161 to 222; these read GNRE…RRDR and NQRR…SPRI. The span at 22 to 42 shows a compositional bias: basic and acidic residues; that stretch reads NREKARQKQQESGKPDQGERR. Residues 188 to 202 show a composition bias toward low complexity; the sequence is SSASGSSRSSFTPRP.

Belongs to the XhoI type II restriction endonuclease family.

It carries out the reaction Endonucleolytic cleavage of DNA to give specific double-stranded fragments with terminal 5'-phosphates.. In terms of biological role, a P subtype restriction enzyme that recognizes the double-stranded sequence 5'-CTCGAG-3' and cleaves after C-1. The chain is Type II restriction enzyme AbrI (abrIR) from Azospirillum brasilense.